Here is a 371-residue protein sequence, read N- to C-terminus: Cytochrome b (371 aa).

Helical transmembrane passes span 32-52 (VGFS…CLAW), 76-98 (FVIR…VHIF), 113-133 (VWAV…IGYV), and 179-199 (LHVL…MHLF). His82 and His96 together coordinate heme b. Positions 183 and 197 each coordinate heme b. An a ubiquinone-binding site is contributed by His202. The next 4 helical transmembrane spans lie at 227-247 (FYLR…YFIF), 296-316 (LMVI…LWFV), 329-349 (LILF…ILAY), and 350-370 (PIWM…VCRL).

It belongs to the cytochrome b family. As to quaternary structure, the main subunits of complex b-c1 are: cytochrome b, cytochrome c1 and the Rieske protein. The cofactor is heme b.

The protein localises to the mitochondrion inner membrane. In terms of biological role, component of the ubiquinol-cytochrome c reductase complex (complex III or cytochrome b-c1 complex) that is part of the mitochondrial respiratory chain. The b-c1 complex mediates electron transfer from ubiquinol to cytochrome c. Contributes to the generation of a proton gradient across the mitochondrial membrane that is then used for ATP synthesis. The polypeptide is Cytochrome b (MT-CYB) (Leishmania tarentolae (Sauroleishmania tarentolae)).